A 420-amino-acid polypeptide reads, in one-letter code: Exodeoxyribonuclease 7 large subunit (420 aa).

This sequence belongs to the XseA family. In terms of assembly, heterooligomer composed of large and small subunits.

The protein resides in the cytoplasm. The catalysed reaction is Exonucleolytic cleavage in either 5'- to 3'- or 3'- to 5'-direction to yield nucleoside 5'-phosphates.. Functionally, bidirectionally degrades single-stranded DNA into large acid-insoluble oligonucleotides, which are then degraded further into small acid-soluble oligonucleotides. The chain is Exodeoxyribonuclease 7 large subunit from Helicobacter pylori (strain J99 / ATCC 700824) (Campylobacter pylori J99).